The sequence spans 930 residues: Translation initiation factor IF-2 (930 aa).

Over residues 50–67 the composition is skewed to low complexity; sequence FKPAAAPKVEAKPAAPKV. 2 disordered regions span residues 50-217 and 260-346; these read FKPA…SSEE and EVVP…HELP. Composition is skewed to basic and acidic residues over residues 68 to 90 and 110 to 125; these read SAEKKAEKSEPAKPAVAKEEAKP and FKAEREARAKEQAERR. A compositionally biased stretch (low complexity) spans 129 to 141; sequence KGNNRDQQQNGNR. Composition is skewed to basic and acidic residues over residues 157 to 167 and 262 to 295; these read RDNRRFNDQAK and VPEKKEPAVDTRRKKQARPDKNRDDYDHEEDGPR. A compositionally biased stretch (low complexity) spans 309-318; that stretch reads NQKNSNWNNN. Positions 337-346 are enriched in basic and acidic residues; it reads VTERKFHELP. The tr-type G domain occupies 432–599; that stretch reads ERPPVVTIMG…TVLLVAEIQE (168 aa). Residues 441–448 are G1; sequence GHVDHGKT. Residue 441–448 coordinates GTP; sequence GHVDHGKT. The tract at residues 466–470 is G2; that stretch reads GITQH. Residues 487 to 490 form a G3 region; the sequence is DTPG. Residues 487-491 and 541-544 contribute to the GTP site; these read DTPGH and NKID. Positions 541-544 are G4; sequence NKID. Positions 577–579 are G5; sequence SAK.

Belongs to the TRAFAC class translation factor GTPase superfamily. Classic translation factor GTPase family. IF-2 subfamily.

The protein resides in the cytoplasm. Functionally, one of the essential components for the initiation of protein synthesis. Protects formylmethionyl-tRNA from spontaneous hydrolysis and promotes its binding to the 30S ribosomal subunits. Also involved in the hydrolysis of GTP during the formation of the 70S ribosomal complex. This chain is Translation initiation factor IF-2, found in Streptococcus pneumoniae (strain ATCC 700669 / Spain 23F-1).